The following is a 511-amino-acid chain: Protoheme IX farnesyltransferase, mitochondrial (511 aa).

Residues 1–23 constitute a mitochondrion transit peptide; sequence MSSSTESLPGTLRRTLTTSRAPA. Disordered regions lie at residues 1–27 and 50–136; these read MSSSTESLPGTLRRTLTTSRAPAATSS and HDSA…LAPD. Low complexity-rich tracts occupy residues 52–79, 104–115, and 126–136; these read SASSQRSTTVASTTSTTADAADGSSSTT, RKAAAAAAAAAA, and PDAPTADLAPD. A run of 8 helical transmembrane segments spans residues 168 to 188, 197 to 217, 253 to 273, 275 to 295, 303 to 323, 344 to 364, 398 to 418, and 444 to 464; these read LTVLVVLSAMVPYALYPVPSF, SLAPSLSPLTLLFLTTGTTLC, AAVLFAVGCGLAGTLALYFGV, PTVSFLGAANIALYAGAYTPL, TWVGAIVGGIPPLMGWAAAAG, LGGWLFAGLLFAWQFPHFMPL, AFIPLCVGLSATGVTEWSFAV, and ARGLFWASVWHLPVIMVLALA.

This sequence belongs to the UbiA prenyltransferase family.

The protein localises to the mitochondrion membrane. Converts protoheme IX and farnesyl diphosphate to heme O. This is Protoheme IX farnesyltransferase, mitochondrial (pft-1) from Neurospora crassa (strain ATCC 24698 / 74-OR23-1A / CBS 708.71 / DSM 1257 / FGSC 987).